Reading from the N-terminus, the 167-residue chain is Small ribosomal subunit protein uS5 (167 aa).

Positions 11–74 (LQEKLIAVNR…DKARRNMTTI (64 aa)) constitute an S5 DRBM domain.

It belongs to the universal ribosomal protein uS5 family. As to quaternary structure, part of the 30S ribosomal subunit. Contacts proteins S4 and S8.

In terms of biological role, with S4 and S12 plays an important role in translational accuracy. Functionally, located at the back of the 30S subunit body where it stabilizes the conformation of the head with respect to the body. In Baumannia cicadellinicola subsp. Homalodisca coagulata, this protein is Small ribosomal subunit protein uS5.